The following is a 165-amino-acid chain: Sporulation-specific cell division protein SsgB (165 aa).

The interval 1 to 21 (MLVGNSWTRSLEPVSGHEHTE) is disordered.

The protein belongs to the SsgA family. In terms of assembly, interacts with SsgA. Interacts with FtsZ (via N-terminus).

The protein resides in the cell septum. Involved in sporulation-specific cell division. Required for early stages of sporulation. Important in the process of growth cessation prior to sporulation-specific cell division. Recruits cell division protein FtsZ to the future septum sites and tethers the contractile ring structure (Z ring) to the cytoplasmic membrane during sporulation. Stimulates polymerization and filament length of FtsZ in vitro. The polypeptide is Sporulation-specific cell division protein SsgB (Kineococcus radiotolerans (strain ATCC BAA-149 / DSM 14245 / SRS30216)).